A 91-amino-acid chain; its full sequence is Small ribosomal subunit protein bS6 (91 aa).

The protein belongs to the bacterial ribosomal protein bS6 family.

In terms of biological role, binds together with bS18 to 16S ribosomal RNA. This Leptospira biflexa serovar Patoc (strain Patoc 1 / Ames) protein is Small ribosomal subunit protein bS6.